Reading from the N-terminus, the 1639-residue chain is Peroxide stress-activated histidine kinase mak1 (1639 aa).

Residues 38–49 (SFTNSQNSSVGS) are compositionally biased toward polar residues. The segment at 38–76 (SFTNSQNSSVGSVHSPILESPTSLNRQHRNSFSFNNVSS) is disordered. Over residues 67–76 (NSFSFNNVSS) the composition is skewed to low complexity. Residues 716–786 (PFPLLKVIID…NDWKSSLFSG (71 aa)) enclose the PAS 1 domain. One can recognise a PAC 1 domain in the interval 789–841 (FYHEIRLQRFDNVYRYFICRAVPLRDCTGSVLHFFGTMTDVHDQKLAERELQK). The 73-residue stretch at 848–920 (NENSYRSLAE…ESLEGTFNNQ (73 aa)) folds into the PAS 2 domain. The 54-residue stretch at 929-982 (FAAEIRFRSTDGHYRWHLVKSVCVNNSADTSTNLWLGTCTDIHDHKMLEEKLQE) folds into the PAC 2 domain. In terms of domain architecture, Histidine kinase spans 1000–1223 (NMSHEIRTPL…RFMWTATFTM (224 aa)). Residue His1003 is modified to Phosphohistidine; by autocatalysis. Residues 1507–1629 (SVLLAEDNII…HLSLIISGIL (123 aa)) form the Response regulatory domain. Asp1559 bears the 4-aspartylphosphate mark.

It is found in the cytoplasm. The catalysed reaction is ATP + protein L-histidine = ADP + protein N-phospho-L-histidine.. Its function is as follows. Involved in the control of the SAPK-dependent transcriptional response to peroxide stress. Also has a role in G2/M regulation. The sequence is that of Peroxide stress-activated histidine kinase mak1 (mak1) from Schizosaccharomyces pombe (strain 972 / ATCC 24843) (Fission yeast).